A 344-amino-acid polypeptide reads, in one-letter code: Ferrochelatase (344 aa).

Residues His-214 and Glu-295 each contribute to the Fe cation site.

It belongs to the ferrochelatase family.

The protein resides in the cytoplasm. It catalyses the reaction heme b + 2 H(+) = protoporphyrin IX + Fe(2+). Its pathway is porphyrin-containing compound metabolism; protoheme biosynthesis; protoheme from protoporphyrin-IX: step 1/1. Its function is as follows. Catalyzes the ferrous insertion into protoporphyrin IX. In Allorhizobium ampelinum (strain ATCC BAA-846 / DSM 112012 / S4) (Agrobacterium vitis (strain S4)), this protein is Ferrochelatase.